Consider the following 374-residue polypeptide: Beta-1,3-N-acetylglucosaminyltransferase lunatic fringe (374 aa).

Over 1-8 (MLKTYRGK) the chain is Cytoplasmic. A helical; Signal-anchor for type II membrane protein transmembrane segment spans residues 9–29 (VVVSLAGATVTCLGFLLFLSQ). Topologically, residues 30–374 (HQRIQADGMQ…TPWCPPQVAY (345 aa)) are lumenal. An N-linked (GlcNAc...) asparagine glycan is attached at Asn40. Residues 80–100 (RSRREADKPSEAPGAATDAPP) form a disordered region. Substrate is bound at residue Arg123. Asn162 carries N-linked (GlcNAc...) asparagine glycosylation. 2 disulfides stabilise this stretch: Cys163–Cys174 and Cys192–Cys255. Residue Asp196 participates in substrate binding. Residue Asp197 coordinates Mn(2+). The active site involves Asp285. Position 309 (His309) interacts with Mn(2+). Cysteines 359 and 368 form a disulfide.

This sequence belongs to the glycosyltransferase 31 family. It depends on Mn(2+) as a cofactor. Co(2+) is required as a cofactor. A soluble form may be derived from the membrane form by proteolytic processing. In the embryo, expressed along the A-P axis of the neural tube, within the lateral plate mesoderm, in the presomitic mesoderm and the somites, in specific rhombomeres of the hindbrain (even-numbered rhombomeres) and in the otic vesicles.

Its subcellular location is the golgi apparatus membrane. It catalyses the reaction 3-O-(alpha-L-fucosyl)-L-threonyl-[EGF-like domain protein] + UDP-N-acetyl-alpha-D-glucosamine = 3-O-(N-acetyl-beta-D-glucosaminyl-(1-&gt;3)-alpha-L-fucosyl)-L-threonyl-[EGF-like domain protein] + UDP + H(+). It carries out the reaction 3-O-(alpha-L-fucosyl)-L-seryl-[EGF-like domain protein] + UDP-N-acetyl-alpha-D-glucosamine = 3-O-(N-acetyl-beta-D-glucosaminyl-(1-&gt;3)-alpha-L-fucosyl)-L-seryl-[EGF-like domain protein] + UDP + H(+). Functionally, glycosyltransferase that initiates the elongation of O-linked fucose residues attached to EGF-like repeats in the extracellular domain of Notch molecules. Involved in the correct formation of boundaries in the somites and hindbrain. Required for Delta-Notch-mediated induction of hypochord cells at the lateral borders of the midline precursor domain. This is Beta-1,3-N-acetylglucosaminyltransferase lunatic fringe (lfng) from Danio rerio (Zebrafish).